The chain runs to 429 residues: Glutamate-1-semialdehyde 2,1-aminomutase (429 aa).

Lysine 265 bears the N6-(pyridoxal phosphate)lysine mark.

This sequence belongs to the class-III pyridoxal-phosphate-dependent aminotransferase family. HemL subfamily. In terms of assembly, homodimer. The cofactor is pyridoxal 5'-phosphate.

The protein resides in the cytoplasm. It carries out the reaction (S)-4-amino-5-oxopentanoate = 5-aminolevulinate. It functions in the pathway porphyrin-containing compound metabolism; protoporphyrin-IX biosynthesis; 5-aminolevulinate from L-glutamyl-tRNA(Glu): step 2/2. The sequence is that of Glutamate-1-semialdehyde 2,1-aminomutase from Legionella pneumophila (strain Corby).